The sequence spans 590 residues: Plasmepsin V (590 aa).

Topologically, residues M1–S544 are lumenal. A coiled-coil region spans residues C33–A81. The region spanning Y100–I514 is the Peptidase A1 domain. D118 is a catalytic residue. Disulfide bonds link C128–C211, C131–C134, C155–C166, C160–C171, C259–C518, C389–C434, and C443–C479. Positions K282–D291 are enriched in basic and acidic residues. The tract at residues K282–N316 is disordered. Residues N292–L304 show a composition bias toward low complexity. D365 is a catalytic residue. A helical membrane pass occupies residues Y545–L565. Over Y566–T590 the chain is Cytoplasmic.

It belongs to the peptidase A1 family. In terms of assembly, component of a complex composed of SPC25 and PMV; the interaction is mediated via the transmembrane domains. The complex interacts with the SEC61 channel-forming translocon complex and is involved in the recognition and import of PEXEL motif-containing proteins into the ER for subsequent export. It is not clear if the zymogen has a cleavable propeptide. In vitro, appears to be cleaved between Asn-80 and Ala-81. Cleavage of the putative propeptide is dispensable for catalytic activity.

The protein localises to the endoplasmic reticulum membrane. Its activity is regulated as follows. Inhibited by peptidomimetic inhibitor WEHI-842. Inhibited by Cu(2+) and Hg(2+). During the asexual blood stage, plays an essential role in the export of several proteins into the host erythrocytes by cleaving the pentameric localization motif RxLxE/Q/D (termed Plasmodium export element (PEXEL)) located downstream of the N-terminal secretory signal sequence. Specifically, cleaves after the leucine residue in the RxLxE/Q/D (or RxLxxE) motif of exported proteins including RESA, EMP2, EMP3, KAHRP, RIF/Rifin and STEVOR. Also, by regulating protein export, plays an essential role in gametocyte development and thus, parasite transmission to the mosquito vector. This Plasmodium falciparum (isolate 3D7) protein is Plasmepsin V.